The chain runs to 413 residues: Clusterin-associated protein 1 (413 aa).

Positions 198-291 form a coiled coil; it reads KTKDLLNNVA…ERFEEAKNTL (94 aa). The interval 305-413 is disordered; that stretch reads LLKSGSNDDS…EPLDESDNDF (109 aa). Acidic residues-rich tracts occupy residues 312-328 and 360-388; these read DDSDIDIQEDDESDSEL and DSDDNEDSEESEIDMEDDDDEDDDLEDES. 3 positions are modified to phosphoserine: serine 314, serine 324, and serine 326. Residue serine 409 is modified to Phosphoserine.

Belongs to the CLUAP1 family. As to quaternary structure, interacts with CLU/clusterin. Interacts with UBXN10; the interaction is direct. Expressed in testis, thyroid and trachea and to a lower extent in spinal cord and adrenal gland. Highly expressed in colon cancer and osteosarcoma cell lines.

Its subcellular location is the cell projection. The protein localises to the cilium. The protein resides in the nucleus. In terms of biological role, required for cilia biogenesis. Appears to function within the multiple intraflagellar transport complex B (IFT-B). Key regulator of hedgehog signaling. This chain is Clusterin-associated protein 1 (CLUAP1), found in Homo sapiens (Human).